A 306-amino-acid polypeptide reads, in one-letter code: tRNA dimethylallyltransferase (306 aa).

6 to 13 (GPTASGKS) lines the ATP pocket. 8-13 (TASGKS) is a binding site for substrate.

The protein belongs to the IPP transferase family. Monomer. Mg(2+) serves as cofactor.

The catalysed reaction is adenosine(37) in tRNA + dimethylallyl diphosphate = N(6)-dimethylallyladenosine(37) in tRNA + diphosphate. Catalyzes the transfer of a dimethylallyl group onto the adenine at position 37 in tRNAs that read codons beginning with uridine, leading to the formation of N6-(dimethylallyl)adenosine (i(6)A). This chain is tRNA dimethylallyltransferase, found in Sphingopyxis alaskensis (strain DSM 13593 / LMG 18877 / RB2256) (Sphingomonas alaskensis).